The primary structure comprises 202 residues: IMP cyclohydrolase (202 aa).

This sequence belongs to the archaeal IMP cyclohydrolase family.

It carries out the reaction IMP + H2O = 5-formamido-1-(5-phospho-D-ribosyl)imidazole-4-carboxamide. The protein operates within purine metabolism; IMP biosynthesis via de novo pathway; IMP from 5-formamido-1-(5-phospho-D-ribosyl)imidazole-4-carboxamide: step 1/1. Its function is as follows. Catalyzes the cyclization of 5-formylamidoimidazole-4-carboxamide ribonucleotide to IMP. The polypeptide is IMP cyclohydrolase (Methanosphaera stadtmanae (strain ATCC 43021 / DSM 3091 / JCM 11832 / MCB-3)).